The primary structure comprises 143 residues: Holo-[acyl-carrier-protein] synthase (143 aa).

Positions 9 and 63 each coordinate Mg(2+).

This sequence belongs to the P-Pant transferase superfamily. AcpS family. It depends on Mg(2+) as a cofactor.

Its subcellular location is the cytoplasm. It catalyses the reaction apo-[ACP] + CoA = holo-[ACP] + adenosine 3',5'-bisphosphate + H(+). Its function is as follows. Transfers the 4'-phosphopantetheine moiety from coenzyme A to a Ser of acyl-carrier-protein. This is Holo-[acyl-carrier-protein] synthase from Burkholderia pseudomallei (strain 1106a).